Here is a 338-residue protein sequence, read N- to C-terminus: 4'-phosphopantetheinyl transferase (338 aa).

Belongs to the P-Pant transferase superfamily.

The enzyme catalyses apo-[ACP] + CoA = holo-[ACP] + adenosine 3',5'-bisphosphate + H(+). Functionally, acyl-carrier-protein synthase that transfers the 4'-phosphopantetheine moiety from coenzyme A to a Ser of an acyl-carrier-protein. The 4'-phosphopantetheine (4'-PPT) portion of CoA provides the essential prosthetic group for a number of carrier proteins and multi-domain enzymes, priming them for the acceptance of acyl building blocks in fatty acid synthesis and many aspects of secondary metabolism mediated by polyketide synthases (PKSs) and non-ribosomal peptide synthetases (NRPSs). Plays a key role in liamocins biosynthesis by activationg the HR-PKS PKS1 that produces 3,5-dihydroxydecanoic acid, a precursor of liamocins. This is 4'-phosphopantetheinyl transferase from Aureobasidium melanogenum (Aureobasidium pullulans var. melanogenum).